The chain runs to 116 residues: Iron-sulfur cluster insertion protein ErpA (116 aa).

Iron-sulfur cluster is bound by residues Cys44, Cys108, and Cys110.

Belongs to the HesB/IscA family. In terms of assembly, homodimer. The cofactor is iron-sulfur cluster.

Its function is as follows. Required for insertion of 4Fe-4S clusters for at least IspG. The protein is Iron-sulfur cluster insertion protein ErpA of Nitrosococcus oceani (strain ATCC 19707 / BCRC 17464 / JCM 30415 / NCIMB 11848 / C-107).